Reading from the N-terminus, the 461-residue chain is Putative long chain fatty acid-CoA ligase VraA (461 aa).

Belongs to the ATP-dependent AMP-binding enzyme family.

This Staphylococcus haemolyticus (strain JCSC1435) protein is Putative long chain fatty acid-CoA ligase VraA (vraA).